A 384-amino-acid polypeptide reads, in one-letter code: Mannitol-1-phosphate 5-dehydrogenase (384 aa).

NAD(+) is bound at residue 3–14 (AVHFGAGNIGRG).

It belongs to the mannitol dehydrogenase family.

The catalysed reaction is D-mannitol 1-phosphate + NAD(+) = beta-D-fructose 6-phosphate + NADH + H(+). This is Mannitol-1-phosphate 5-dehydrogenase from Arthrobacter sp. (strain FB24).